A 492-amino-acid chain; its full sequence is Catalase isozyme 3 (492 aa).

Catalysis depends on residues His-65 and Asn-138. Tyr-347 contributes to the heme binding site.

It belongs to the catalase family. In terms of assembly, homotetramer. Requires heme as cofactor. Abundant in green cotyledons, etiolated cotyledons, green hypocotyl and root, but not in young leaf.

The protein localises to the peroxisome. It carries out the reaction 2 H2O2 = O2 + 2 H2O. In terms of biological role, occurs in almost all aerobically respiring organisms and serves to protect cells from the toxic effects of hydrogen peroxide. This Cucurbita pepo (Vegetable marrow) protein is Catalase isozyme 3 (CAT3).